The sequence spans 208 residues: Sodium/potassium-transporting ATPase subunit beta-1-interacting protein 4 (208 aa).

Transmembrane regions (helical) follow at residues 35–55 (APIL…FGTI), 62–82 (VMVY…IICF), and 151–171 (CLQI…VSVF).

It belongs to the NKAIN family. As to quaternary structure, interacts with ATP1B1.

It localises to the cell membrane. This is Sodium/potassium-transporting ATPase subunit beta-1-interacting protein 4 (NKAIN4) from Homo sapiens (Human).